The primary structure comprises 463 residues: Sodium-coupled neutral amino acid transporter 7 (463 aa).

Ser-28 bears the Phosphoserine mark. Helical transmembrane passes span 56–76, 82–102, 130–150, 179–199, 206–226, 240–260, 283–303, 320–340, 372–392, 396–416, and 429–449; these read AVFIVVNACLGAGLLNFPAAF, VAAGIALQMGMLVFIISGLVI, LCEIAIAVYTFGTCIAFLIII, FTISLTAFLFILPLSIPKEIG, SLSVVGTWYVTAIVIIKYIWP, ASWMAVFNAMPTICFGFQCHV, AAMVIALAVYMGTGICGFLTF, VAVAVARAFIILSVLTSYPIL, VLQTLVWFLLTLLLALFIPDI, ISVIGGLAACFIFIFPGLCLI, and ASWWALVSYGVLLVTLGAFIF.

It belongs to the amino acid/polyamine transporter 2 family. In terms of assembly, interacts with the mTORC1 complex; this interaction mediates the recruitment of mTORC1 to the lysosome and its subsequent activation.

Its subcellular location is the lysosome membrane. The protein resides in the cell projection. The protein localises to the axon. The catalysed reaction is L-asparagine(in) + Na(+)(in) = L-asparagine(out) + Na(+)(out). The enzyme catalyses L-glutamine(in) + Na(+)(in) = L-glutamine(out) + Na(+)(out). Functionally, symporter that selectively cotransports sodium ions and amino acids, such as L-glutamine and L-asparagine from the lysosome into the cytoplasm and may participates in mTORC1 activation. The transport activity requires an acidic lysosomal lumen. The chain is Sodium-coupled neutral amino acid transporter 7 from Rattus norvegicus (Rat).